Here is a 152-residue protein sequence, read N- to C-terminus: Protein FERTILITY RESTORER RF2, mitochondrial (152 aa).

A mitochondrion-targeting transit peptide spans 1–52; it reads MSTLVTCSLPGAVTTHASTRRFGGSQFQTSQASCISFKREVSAKAVLRSVRC. The segment covering 52 to 69 has biased composition (polar residues); sequence CNATQTQSAQRKSSTATV. Positions 52–99 are disordered; it reads CNATQTQSAQRKSSTATVKRSDPKGKIQGPKLDDGSGGFPPFRFGKGG.

Its subcellular location is the mitochondrion. Its function is as follows. Restores fertility in rice varieties with LD-type cytoplasmic male sterility (CMS). CMS is caused by genetic incompatibility between nuclei and mitochondria within male reproductive organs. Corresponds to the functional allele of RF2, which is dependent of the presence of Ile-78 in the japonica cultivars Fukuyama and Owarihatamochi (AC F1SZ42), and indica cultivar Kasalath (AC F1SZ41). Non-functional RF2 alleles are found in japonica cultivars Taichung 65 and Nipponbare (AC F1SZ44), where Ile-78 is replaced by Thr-78. This is Protein FERTILITY RESTORER RF2, mitochondrial from Oryza sativa subsp. japonica (Rice).